The following is a 210-amino-acid chain: HTH-type transcriptional regulator MtrR (210 aa).

Residues 9-69 enclose the HTH tetR-type domain; the sequence is LKTKEHLMLA…ALFQRICDDI (61 aa). The segment at residues 32–51 is a DNA-binding region (H-T-H motif); the sequence is SLNEIAQAAGVTRGALYWHF.

In terms of assembly, homodimer. Binds to DNA as a pair of dimers.

With respect to regulation, DNA binding is affected significantly by increasing the NaCl concentration. Its function is as follows. Controls the permeability of the cell envelope to hydrophobic compounds such as antibiotics and detergents. Represses transcription of the mtrCDE-encoded efflux pump by binding within the mtrCDE promoter. Also negatively regulates the expression of farR, by binding to its promoter region, leading indirectly to the positive regulation of expression of the farAB-encoded efflux pump. In Neisseria gonorrhoeae, this protein is HTH-type transcriptional regulator MtrR.